The sequence spans 357 residues: Outer membrane porin protein OmpD (357 aa).

Positions 1 to 21 (MKLKLVAVAVTTLLAAGAVNA) are cleaved as a signal peptide.

It belongs to the Gram-negative porin family. In terms of assembly, homotrimer.

It is found in the cell outer membrane. In terms of biological role, forms pores that allow passive diffusion of small molecules across the outer membrane. The sequence is that of Outer membrane porin protein OmpD (ompD) from Citrobacter koseri (strain ATCC BAA-895 / CDC 4225-83 / SGSC4696).